A 600-amino-acid chain; its full sequence is Aspartate--tRNA(Asp/Asn) ligase (600 aa).

Glutamate 174 is an L-aspartate binding site. Positions 198 to 201 are aspartate; the sequence is QLFK. Arginine 220 is an L-aspartate binding site. Residues 220 to 222 and glutamine 229 each bind ATP; that span reads RDE. Residue histidine 457 participates in L-aspartate binding. ATP is bound at residue glutamate 491. Arginine 498 contributes to the L-aspartate binding site. 543 to 546 provides a ligand contact to ATP; it reads GLDR.

The protein belongs to the class-II aminoacyl-tRNA synthetase family. Type 1 subfamily. In terms of assembly, homodimer.

The protein localises to the cytoplasm. The catalysed reaction is tRNA(Asx) + L-aspartate + ATP = L-aspartyl-tRNA(Asx) + AMP + diphosphate. Aspartyl-tRNA synthetase with relaxed tRNA specificity since it is able to aspartylate not only its cognate tRNA(Asp) but also tRNA(Asn). Reaction proceeds in two steps: L-aspartate is first activated by ATP to form Asp-AMP and then transferred to the acceptor end of tRNA(Asp/Asn). The sequence is that of Aspartate--tRNA(Asp/Asn) ligase from Burkholderia vietnamiensis (strain G4 / LMG 22486) (Burkholderia cepacia (strain R1808)).